Here is a 71-residue protein sequence, read N- to C-terminus: Conotoxin LvVIB (71 aa).

A signal peptide spans 1–17 (VLIIAVLFLTASELVTA). A propeptide spanning residues 18–41 (DYTRDKWQYRAASLRDAMRNFRDT) is cleaved from the precursor. 3 disulfides stabilise this stretch: cysteine 43–cysteine 57, cysteine 50–cysteine 62, and cysteine 56–cysteine 69.

It belongs to the conotoxin O1 superfamily. Expressed by the venom duct.

It is found in the secreted. This chain is Conotoxin LvVIB, found in Conus lividus (Livid cone).